A 259-amino-acid polypeptide reads, in one-letter code: Putative hydro-lyase Bphyt_4813 (259 aa).

It belongs to the D-glutamate cyclase family.

The chain is Putative hydro-lyase Bphyt_4813 from Paraburkholderia phytofirmans (strain DSM 17436 / LMG 22146 / PsJN) (Burkholderia phytofirmans).